The sequence spans 66 residues: Large ribosomal subunit protein uL29 (66 aa).

It belongs to the universal ribosomal protein uL29 family.

This Thermococcus sibiricus (strain DSM 12597 / MM 739) protein is Large ribosomal subunit protein uL29.